The sequence spans 223 residues: MQKQRFCLDTTAITDSGVRKSLGATNISESAEKIMDIISKARVKLDISCHIPYNTVYNELIGFLNREGCKNEIIIKVDTWLVKKTPNRYEIKIPSEILYEYIKDLRERINKGMRISENAMYETALEAYILKKPEEKNKDDVLNEVLSKTVNNFRDKYRNALRGGTLDSAPDLDVLLLAKELDAAVVANDEGIEKWAQRLGLRFVNAKDFPFILQEYLDMWGKK.

It belongs to the HARP family.

It carries out the reaction Endonucleolytic cleavage of RNA, removing 5'-extranucleotides from tRNA precursor.. In terms of biological role, RNA-free RNase P that catalyzes the removal of the 5'-leader sequence from pre-tRNA to produce the mature 5'-terminus. This chain is RNA-free ribonuclease P, found in Methanococcus vannielii (strain ATCC 35089 / DSM 1224 / JCM 13029 / OCM 148 / SB).